A 139-amino-acid polypeptide reads, in one-letter code: Crossover junction endodeoxyribonuclease Hje (139 aa).

E10, D39, and E52 together coordinate Mg(2+).

It belongs to the Holliday junction resolvase Hjc family. Hje subfamily. In terms of assembly, homodimer. Requires Mg(2+) as cofactor.

It catalyses the reaction Endonucleolytic cleavage at a junction such as a reciprocal single-stranded crossover between two homologous DNA duplexes (Holliday junction).. In terms of biological role, a structure-specific endonuclease that resolves Holliday junction (HJ) intermediates during genetic recombination. Acts only on 4-way DNA junctions in a sequence non-specific manner; introduces paired nicks in opposing strands 2 bases 3' of the point of strand exchange only on continuous strands of 4-way junction DNA. Cleaves both mobile and immobile junctions. Functionally, redundant function with Holliday junction resolvase Hjc. This Sulfolobus acidocaldarius (strain ATCC 33909 / DSM 639 / JCM 8929 / NBRC 15157 / NCIMB 11770) protein is Crossover junction endodeoxyribonuclease Hje.